Here is a 122-residue protein sequence, read N- to C-terminus: Photosystem II extrinsic protein U (122 aa).

Positions 1 to 26 (MKTIVRLFAILMVLISSVGFVGSAVA) are cleaved as a signal peptide.

It belongs to the PsbU family. PSII is composed of 1 copy each of membrane proteins PsbA, PsbB, PsbC, PsbD, PsbE, PsbF, PsbH, PsbI, PsbJ, PsbK, PsbL, PsbM, PsbT, PsbX, PsbY, PsbZ, Psb30/Ycf12, peripheral proteins PsbO, CyanoQ (PsbQ), PsbU, PsbV and a large number of cofactors. It forms dimeric complexes.

The protein localises to the cellular thylakoid membrane. Functionally, one of the extrinsic, lumenal subunits of photosystem II (PSII). PSII is a light-driven water plastoquinone oxidoreductase, using light energy to abstract electrons from H(2)O, generating a proton gradient subsequently used for ATP formation. The extrinsic proteins stabilize the structure of photosystem II oxygen-evolving complex (OEC), the ion environment of oxygen evolution and protect the OEC against heat-induced inactivation. This is Photosystem II extrinsic protein U from Crocosphaera subtropica (strain ATCC 51142 / BH68) (Cyanothece sp. (strain ATCC 51142)).